We begin with the raw amino-acid sequence, 1086 residues long: DNA polymerase delta catalytic subunit (1086 aa).

The tract at residues 1–64 (MTDRSSNEGV…KTSSFEDELA (64 aa)) is disordered. Over residues 29 to 58 (EITDVKRRRLSERNGYGDKKGSSSKEKTSS) the composition is skewed to basic and acidic residues. Residues Cys-993, Cys-996, Cys-1008, and Cys-1011 each contribute to the Zn(2+) site. The CysA-type zinc-finger motif lies at 993–1011 (CLGCKAPIKKGKTALCENC). Residues Cys-1040, Cys-1043, Cys-1053, and Cys-1058 each coordinate [4Fe-4S] cluster. Residues 1040–1058 (CQRCQGSMHQDVICTSRDC) carry the CysB motif motif.

The protein belongs to the DNA polymerase type-B family. Heterotetramer that consist of the pol3, cdc1, cdc27 and cdm1 subunits. The pol3 subunit contains the polymerase active site and most likely the active site for the 3'-5' exonuclease activity. [4Fe-4S] cluster is required as a cofactor.

The protein localises to the nucleus. It carries out the reaction DNA(n) + a 2'-deoxyribonucleoside 5'-triphosphate = DNA(n+1) + diphosphate. Functionally, catalytic component of DNA polymerase delta (DNA polymerase III) which participates in chromosomal DNA replication. Required during synthesis of the lagging DNA strands at the replication fork, binds at/or near replication origins and moves along DNA with the replication fork. Participates in leading strand synthesis during replication initiation and termination. Has 3'-5' proofreading exonuclease activity that corrects errors arising during DNA replication. The polypeptide is DNA polymerase delta catalytic subunit (pol3) (Schizosaccharomyces pombe (strain 972 / ATCC 24843) (Fission yeast)).